We begin with the raw amino-acid sequence, 242 residues long: MATVSMRDMLKAGVHFGHQTRYWNPKMKPFIFGARNRVHIINLEKTVPMFNEALAELVKVGEKKGKVLFVGTKRAASEAVKEAAIASNQYYVNNRWLGGMLTNYKTVRQSIKRLKELEVQSTDGTFDKLTKKEALMRTREMEKLEKSLGGIKDMGGLPDALFVIDADHEHIAIKEANNLGIPVFAVVDTNSNPDGVDYIIPGNDDAIRAVQLYLNAAASSLTEGRNKDVAAVAEKDGFVEAE.

It belongs to the universal ribosomal protein uS2 family.

In Vibrio vulnificus (strain CMCP6), this protein is Small ribosomal subunit protein uS2.